A 287-amino-acid polypeptide reads, in one-letter code: Pirin-1 (287 aa).

Position 2 is an N-acetylthreonine (Thr2).

The protein belongs to the pirin family. Interacts with the G protein alpha-1 subunit GPA1. Interacts with NFYB6 and NFYB9.

The protein resides in the nucleus. Involved in abscisic acid signal transduction. Plays a role in seed germination and early seedling development. Involved in the blue light (BL) signaling. The sequence is that of Pirin-1 (PRN1) from Arabidopsis thaliana (Mouse-ear cress).